A 526-amino-acid chain; its full sequence is MEEFPGYLEXDRSRQQPFXYPLLFQEYIYALAHNHNRGLKGSLFYGPSEVXGYDSKSSLALVKRLIIRIYQQNDFLPVVNDSNKXRFVSHHRGNFFYSHFYSXMISEGYAILVEIPFSLRLVSYFEKKEIPKSHNLRSIHSIFPFXXXXXXXXNYVSDILIPHPIHMEILVQILQCRIQDVPFLHFLPFFLHKYHNWNWNSFLITPKKSIYVFSKENKRLFRFLYNSYVSECEFLLVFLRKQSSYLRLTSFGLFLERRHFYVKIKRLQMQHLILIVVCRDYFQGTLWSFKDPFMHYVRCQGKAVLASKGTHLLMKKWKYNFVNLWQYYFNFWYQSYRIHINQLSNYSFYFLGYLSSLLKNSSMVRNQMLENSFLVDTVTNKFETLVPVIFLIGSLSKAQFCTVLGHPISKPIWADLPDSEIIERFGRMCRNLSHYHSGSSKKQGLYRIKYILRLSCARTLARKHKSTVRVFLRRLGSGLLEEFFTEEEQVLSLILPKTIPFTFYGSHKERIWYLDIIRINDLVNHS.

The protein belongs to the intron maturase 2 family. MatK subfamily.

It localises to the plastid. It is found in the chloroplast. Its function is as follows. Usually encoded in the trnK tRNA gene intron. Probably assists in splicing its own and other chloroplast group II introns. This chain is Maturase K, found in Iris pseudacorus (Yellow flag).